A 338-amino-acid polypeptide reads, in one-letter code: Glycerol-3-phosphate dehydrogenase [NAD(P)+] (338 aa).

4 residues coordinate NADPH: serine 12, tryptophan 13, arginine 33, and lysine 110. The sn-glycerol 3-phosphate site is built by lysine 110, glycine 141, and serine 143. Alanine 145 serves as a coordination point for NADPH. 5 residues coordinate sn-glycerol 3-phosphate: lysine 196, aspartate 249, serine 259, arginine 260, and asparagine 261. Lysine 196 (proton acceptor) is an active-site residue. Arginine 260 lines the NADPH pocket. The NADPH site is built by valine 284 and glutamate 286.

It belongs to the NAD-dependent glycerol-3-phosphate dehydrogenase family.

The protein localises to the cytoplasm. It carries out the reaction sn-glycerol 3-phosphate + NAD(+) = dihydroxyacetone phosphate + NADH + H(+). It catalyses the reaction sn-glycerol 3-phosphate + NADP(+) = dihydroxyacetone phosphate + NADPH + H(+). The protein operates within membrane lipid metabolism; glycerophospholipid metabolism. In terms of biological role, catalyzes the reduction of the glycolytic intermediate dihydroxyacetone phosphate (DHAP) to sn-glycerol 3-phosphate (G3P), the key precursor for phospholipid synthesis. This is Glycerol-3-phosphate dehydrogenase [NAD(P)+] from Limosilactobacillus reuteri (strain DSM 20016) (Lactobacillus reuteri).